A 123-amino-acid polypeptide reads, in one-letter code: ATP synthase epsilon chain (123 aa).

Belongs to the ATPase epsilon chain family. F-type ATPases have 2 components, CF(1) - the catalytic core - and CF(0) - the membrane proton channel. CF(1) has five subunits: alpha(3), beta(3), gamma(1), delta(1), epsilon(1). CF(0) has three main subunits: a, b and c.

It localises to the cell inner membrane. In terms of biological role, produces ATP from ADP in the presence of a proton gradient across the membrane. This chain is ATP synthase epsilon chain, found in Helicobacter pylori (strain G27).